Reading from the N-terminus, the 358-residue chain is MSAAALKNDVFLRALLRQPVPYTPIWLMRQAGRYLPEYNATRARAGSFMGLAQNPDYAAEVTLQPLARYDLDAAILFSDILTVPHAMGLGLDFAPGEGPRFARPLRTEDDVARLAVPDMESLRYVFDAVAVIRRELDGKVPLIGFAGSPWTIACYMVEGRGSDDYRLIKTMLYARPDLLHRILEVNAQATLQYLNAQIQAGAQAVMLFDSWGGVLADGLFQQFSLAYTRKVVAGLIREHQGRRVPAIVFTKGGGQWLEAIAACGCDAIGLDWTVNLGQARQRTGDAVALQGNLDPMTLFGGSEAIRAEARRTLDAFGPVGTGGHVFNLGHGISQYTPPEAVAELVDEVHTYSRALHAK.

Substrate-binding positions include 29–33 (RQAGR), aspartate 79, tyrosine 155, serine 210, and histidine 330.

This sequence belongs to the uroporphyrinogen decarboxylase family. Homodimer.

It is found in the cytoplasm. The enzyme catalyses uroporphyrinogen III + 4 H(+) = coproporphyrinogen III + 4 CO2. Its pathway is porphyrin-containing compound metabolism; protoporphyrin-IX biosynthesis; coproporphyrinogen-III from 5-aminolevulinate: step 4/4. Catalyzes the decarboxylation of four acetate groups of uroporphyrinogen-III to yield coproporphyrinogen-III. This Bordetella petrii (strain ATCC BAA-461 / DSM 12804 / CCUG 43448) protein is Uroporphyrinogen decarboxylase.